The following is an 858-amino-acid chain: Leucine--tRNA ligase (858 aa).

The 'HIGH' region motif lies at 42–52 (PYPSGRLHMGH). The 'KMSKS' region motif lies at 618–622 (KMSKS). Lys621 contacts ATP.

It belongs to the class-I aminoacyl-tRNA synthetase family.

Its subcellular location is the cytoplasm. The catalysed reaction is tRNA(Leu) + L-leucine + ATP = L-leucyl-tRNA(Leu) + AMP + diphosphate. The chain is Leucine--tRNA ligase from Vibrio cholerae serotype O1 (strain ATCC 39315 / El Tor Inaba N16961).